Reading from the N-terminus, the 41-residue chain is Photosystem II reaction center protein Y (41 aa).

The chain crosses the membrane as a helical span at residues 7-25 (IAIVLAPVVIAASWAVFNI).

Belongs to the PsbY family. As to quaternary structure, PSII is composed of 1 copy each of membrane proteins PsbA, PsbB, PsbC, PsbD, PsbE, PsbF, PsbH, PsbI, PsbJ, PsbK, PsbL, PsbM, PsbT, PsbX, PsbY, PsbZ, Psb30/Ycf12, peripheral proteins PsbO, CyanoQ (PsbQ), PsbU, PsbV and a large number of cofactors. It forms dimeric complexes.

It is found in the cellular thylakoid membrane. Its function is as follows. Loosely associated component of the core of photosystem II (PSII), it is not always seen in crystals. PSII is a light-driven water plastoquinone oxidoreductase, using light energy to abstract electrons from H(2)O, generating a proton gradient subsequently used for ATP formation. The chain is Photosystem II reaction center protein Y from Nostoc punctiforme (strain ATCC 29133 / PCC 73102).